The primary structure comprises 394 residues: Phosphoglycerate kinase (394 aa).

Residues 21-23, Arg36, 59-62, Arg118, and Arg151 contribute to the substrate site; these read DFN and HLGR. Position 183 is a phosphoserine (Ser183). Lys201 is an ATP binding site. Position 299 is a phosphothreonine (Thr299). Residues Glu323 and 350–353 each bind ATP; that span reads GGDS.

It belongs to the phosphoglycerate kinase family. In terms of assembly, monomer.

It is found in the cytoplasm. It carries out the reaction (2R)-3-phosphoglycerate + ATP = (2R)-3-phospho-glyceroyl phosphate + ADP. The protein operates within carbohydrate degradation; glycolysis; pyruvate from D-glyceraldehyde 3-phosphate: step 2/5. This Shouchella clausii (strain KSM-K16) (Alkalihalobacillus clausii) protein is Phosphoglycerate kinase.